A 65-amino-acid chain; its full sequence is Large ribosomal subunit protein eL24 (65 aa).

Cys-6, Cys-9, Cys-32, and Cys-36 together coordinate Zn(2+). The segment at 6–36 adopts a C4-type zinc-finger fold; the sequence is CAFCGADIPPGYGIMYVKSDGTVLRYCSRKC.

Belongs to the eukaryotic ribosomal protein eL24 family. Part of the 50S ribosomal subunit. Forms a cluster with proteins L3 and L14. Requires Zn(2+) as cofactor.

Functionally, binds to the 23S rRNA. This Pyrobaculum arsenaticum (strain DSM 13514 / JCM 11321 / PZ6) protein is Large ribosomal subunit protein eL24.